We begin with the raw amino-acid sequence, 307 residues long: Dioxygenase swnH1 (307 aa).

Fe cation-binding residues include His-149, Asp-151, and His-227.

It belongs to the PhyH family. In terms of assembly, homodimer. It depends on Fe cation as a cofactor.

Its pathway is mycotoxin biosynthesis. Functionally, dioxygenase; part of the gene cluster that mediates the biosynthesis of swainsonine (SW), a cytotoxic fungal alkaloid and a potential cancer therapy drug. Swainsonine production occurs via a multibranched pathway and is dispensable for fungal colonization of plants and infection of insect hosts. The first step of swainsonine biosynthesis is the production of the precursor pipecolic acid (PA) via conversion of L-lysine (Lys) to 1-piperideine-6-carboxylate (P6C) by the aminotransferase swnA, the latter being further reduced to PA by the reductase swnR. PA can be converted from lysine by both the SW biosynthetic cluster and the unclustered genes such as lysine cyclodeaminase. The PKS-NRPS hybrid synthetase swnK uptakes and condensates PA and malonyl-CoA with and without skipping of the ketoreductase (KR) domain in order to produce 3 intermediates, 1-oxoindolizidine, (1S)-1-hydroxyindolizin, and (1R)-1-hydroxyindolizine; with the transisomer (1S)-1-hydroxyindolizin being predominant. The terminal thioester reductase (TE) domain of swnK is involved in reduction of the thioester bond to release the intermediate aldehydes. The oxidoreductase swnN could contribute to the reduction of 1-oxoindolizidine to (1S)-1-hydroxyindolizin and (1R)-1-hydroxyindolizine, contributing to the major route of SW production. The dioxygenase swnH2 would be responsible for the oxidization of (1R)-1-hydroxyindolizine into (1R,2S)-1,2-dihydroxyindolizine and of (1S)-1-hydroxyindolizin to yield both (1R,2S)-1,2-dihydroxyindolizine and (1S,2S)-1,2-dihydroxyindolizine. The dioxygenase swnH1 then performs the conversion of the 1,2-dihydroxyindolizine epimers to SW. The polypeptide is Dioxygenase swnH1 (Metarhizium robertsii (strain ARSEF 23 / ATCC MYA-3075) (Metarhizium anisopliae (strain ARSEF 23))).